The primary structure comprises 305 residues: Methionyl-tRNA formyltransferase (305 aa).

109–112 (SLLP) serves as a coordination point for (6S)-5,6,7,8-tetrahydrofolate.

Belongs to the Fmt family.

It catalyses the reaction L-methionyl-tRNA(fMet) + (6R)-10-formyltetrahydrofolate = N-formyl-L-methionyl-tRNA(fMet) + (6S)-5,6,7,8-tetrahydrofolate + H(+). Its function is as follows. Attaches a formyl group to the free amino group of methionyl-tRNA(fMet). The formyl group appears to play a dual role in the initiator identity of N-formylmethionyl-tRNA by promoting its recognition by IF2 and preventing the misappropriation of this tRNA by the elongation apparatus. The sequence is that of Methionyl-tRNA formyltransferase from Paramagnetospirillum magneticum (strain ATCC 700264 / AMB-1) (Magnetospirillum magneticum).